We begin with the raw amino-acid sequence, 425 residues long: MLNIKWIRENKELFDEKLSQRFIEPMSSKIAMLDGEKRKITSLIQELQHARKVKSKILGNMASKSGEEFEGLQRDVKHINEKLEALEHDLNNNNELNELLNMFPNIPDEEVPYGMDASMNKLVRTYGETNPNALNKQHFELGIKLNLMDFEQTAKISGTKFVTLKGDLAKLERALINFMIDVHTKEWDFFEISPPVLVRDNAMYNAGQLPKFAEESFATTNGYRLIPTAEVSLVNMVADTIIPREKLPIRYVAYTQCFRSEAGSSGRDTRGMIRLHQFGKVELVSITTPEESTNEHEYITNASETILQKLNLPYRVMLLCTGDMGFAAKKTYDIEVWLPGQKQYREIASCSNCGDFQARRMKARYKEFGSNETTLVHTLNASGLPIGRTMVAILENYQNEDGSITIPDVLINYMGGLQKIIAYSE.

228 to 230 (TAE) contributes to the L-serine binding site. An ATP-binding site is contributed by 259–261 (RSE). E282 contacts L-serine. Residue 346 to 349 (EIAS) participates in ATP binding. S382 serves as a coordination point for L-serine.

Belongs to the class-II aminoacyl-tRNA synthetase family. Type-1 seryl-tRNA synthetase subfamily. In terms of assembly, homodimer. The tRNA molecule binds across the dimer.

The protein resides in the cytoplasm. It carries out the reaction tRNA(Ser) + L-serine + ATP = L-seryl-tRNA(Ser) + AMP + diphosphate + H(+). The catalysed reaction is tRNA(Sec) + L-serine + ATP = L-seryl-tRNA(Sec) + AMP + diphosphate + H(+). The protein operates within aminoacyl-tRNA biosynthesis; selenocysteinyl-tRNA(Sec) biosynthesis; L-seryl-tRNA(Sec) from L-serine and tRNA(Sec): step 1/1. Catalyzes the attachment of serine to tRNA(Ser). Is also able to aminoacylate tRNA(Sec) with serine, to form the misacylated tRNA L-seryl-tRNA(Sec), which will be further converted into selenocysteinyl-tRNA(Sec). In Rickettsia rickettsii (strain Iowa), this protein is Serine--tRNA ligase.